Consider the following 207-residue polypeptide: Coiled-coil domain-containing protein 124 homolog (207 aa).

A disordered region spans residues 1–90; the sequence is MGNPKKRAEK…KAAKKNSSLD (90 aa). Residues 5–71 are a coiled coil; it reads KKRAEKAEAA…RLEKEEMESL (67 aa). 2 stretches are compositionally biased toward basic and acidic residues: residues 9–28 and 41–65; these read EKAE…KKDA and NKKE…RLEK.

Belongs to the CCDC124 family. As to quaternary structure, associates with translationally inactive ribosomes in the nonrotated state.

Its subcellular location is the cytoplasm. It is found in the nucleus. Ribosome-binding protein involved in ribosome hibernation by associating with translationally inactive ribosomes. Required for translational recovery after starvation from stationary phase. May facilitate rapid translation reactivation by stabilizing the recycling-competent state of inactive ribosomes. The sequence is that of Coiled-coil domain-containing protein 124 homolog from Schizosaccharomyces pombe (strain 972 / ATCC 24843) (Fission yeast).